The sequence spans 902 residues: HTH-type transcriptional regulator MalT (902 aa).

Position 39–46 (39–46) interacts with ATP; that stretch reads SPAGYGKT. Positions 832–897 constitute an HTH luxR-type domain; sequence ELVRTSPLTQ…EAIVTAENLL (66 aa). Residues 856 to 875 constitute a DNA-binding region (H-T-H motif); sequence NEQIAQELDVAGTTIKTHIR.

It belongs to the MalT family. In terms of assembly, monomer in solution. Oligomerizes to an active state in the presence of the positive effectors ATP and maltotriose.

Its activity is regulated as follows. Activated by ATP and maltotriose, which are both required for DNA binding. Functionally, positively regulates the transcription of the maltose regulon whose gene products are responsible for uptake and catabolism of malto-oligosaccharides. Specifically binds to the promoter region of its target genes, recognizing a short DNA motif called the MalT box. The chain is HTH-type transcriptional regulator MalT from Vibrio parahaemolyticus serotype O3:K6 (strain RIMD 2210633).